Here is a 184-residue protein sequence, read N- to C-terminus: Transposon Tn917 resolvase (184 aa).

Positions 1–134 constitute a Resolvase/invertase-type recombinase catalytic domain; sequence MIFGYARVST…SGLKAARVRG (134 aa). Catalysis depends on Ser9, which acts as the O-(5'-phospho-DNA)-serine intermediate. Residues 161–180 constitute a DNA-binding region (H-T-H motif); the sequence is IRQILDASKLSKTTFYRYLN.

It belongs to the site-specific recombinase resolvase family.

Resolvase catalyzes the resolution (a site-specific recombination) of the cointegrated replicon to yield the final transposition products. This chain is Transposon Tn917 resolvase (tnpR), found in Enterococcus faecalis (Streptococcus faecalis).